The chain runs to 179 residues: ATP synthase subunit delta (179 aa).

Belongs to the ATPase delta chain family. F-type ATPases have 2 components, F(1) - the catalytic core - and F(0) - the membrane proton channel. F(1) has five subunits: alpha(3), beta(3), gamma(1), delta(1), epsilon(1). F(0) has three main subunits: a(1), b(2) and c(10-14). The alpha and beta chains form an alternating ring which encloses part of the gamma chain. F(1) is attached to F(0) by a central stalk formed by the gamma and epsilon chains, while a peripheral stalk is formed by the delta and b chains.

Its subcellular location is the cell membrane. Functionally, f(1)F(0) ATP synthase produces ATP from ADP in the presence of a proton or sodium gradient. F-type ATPases consist of two structural domains, F(1) containing the extramembraneous catalytic core and F(0) containing the membrane proton channel, linked together by a central stalk and a peripheral stalk. During catalysis, ATP synthesis in the catalytic domain of F(1) is coupled via a rotary mechanism of the central stalk subunits to proton translocation. This protein is part of the stalk that links CF(0) to CF(1). It either transmits conformational changes from CF(0) to CF(1) or is implicated in proton conduction. The sequence is that of ATP synthase subunit delta from Clostridium perfringens (strain ATCC 13124 / DSM 756 / JCM 1290 / NCIMB 6125 / NCTC 8237 / Type A).